Consider the following 600-residue polypeptide: Dihydroxy-acid dehydratase (600 aa).

A Mg(2+)-binding site is contributed by Asp82. [2Fe-2S] cluster is bound at residue Cys123. The Mg(2+) site is built by Asp124 and Lys125. Residue Lys125 is modified to N6-carboxylysine. Cys192 lines the [2Fe-2S] cluster pocket. Glu489 contributes to the Mg(2+) binding site. Ser515 serves as the catalytic Proton acceptor.

It belongs to the IlvD/Edd family. In terms of assembly, homodimer. [2Fe-2S] cluster serves as cofactor. It depends on Mg(2+) as a cofactor.

It carries out the reaction (2R)-2,3-dihydroxy-3-methylbutanoate = 3-methyl-2-oxobutanoate + H2O. It catalyses the reaction (2R,3R)-2,3-dihydroxy-3-methylpentanoate = (S)-3-methyl-2-oxopentanoate + H2O. It functions in the pathway amino-acid biosynthesis; L-isoleucine biosynthesis; L-isoleucine from 2-oxobutanoate: step 3/4. The protein operates within amino-acid biosynthesis; L-valine biosynthesis; L-valine from pyruvate: step 3/4. Its function is as follows. Functions in the biosynthesis of branched-chain amino acids. Catalyzes the dehydration of (2R,3R)-2,3-dihydroxy-3-methylpentanoate (2,3-dihydroxy-3-methylvalerate) into 2-oxo-3-methylpentanoate (2-oxo-3-methylvalerate) and of (2R)-2,3-dihydroxy-3-methylbutanoate (2,3-dihydroxyisovalerate) into 2-oxo-3-methylbutanoate (2-oxoisovalerate), the penultimate precursor to L-isoleucine and L-valine, respectively. The polypeptide is Dihydroxy-acid dehydratase (Bacteroides fragilis (strain YCH46)).